Reading from the N-terminus, the 150-residue chain is Small ribosomal subunit protein uS11z (150 aa).

At Ser19 the chain carries Phosphoserine.

This sequence belongs to the universal ribosomal protein uS11 family. As to quaternary structure, interacts with AAK6.

It is found in the cytoplasm. The sequence is that of Small ribosomal subunit protein uS11z (RPS14A) from Arabidopsis thaliana (Mouse-ear cress).